Here is a 45-residue protein sequence, read N- to C-terminus: Photosystem II reaction center protein K (45 aa).

The propeptide occupies 1–8 (MELMLLFA). The chain crosses the membrane as a helical span at residues 24–44 (LPVIPVLFLALAFVWQASVGF).

It belongs to the PsbK family. As to quaternary structure, PSII is composed of 1 copy each of membrane proteins PsbA, PsbB, PsbC, PsbD, PsbE, PsbF, PsbH, PsbI, PsbJ, PsbK, PsbL, PsbM, PsbT, PsbX, PsbY, PsbZ, Psb30/Ycf12, peripheral proteins PsbO, CyanoQ (PsbQ), PsbU, PsbV and a large number of cofactors. It forms dimeric complexes.

It localises to the cellular thylakoid membrane. Functionally, one of the components of the core complex of photosystem II (PSII). PSII is a light-driven water:plastoquinone oxidoreductase that uses light energy to abstract electrons from H(2)O, generating O(2) and a proton gradient subsequently used for ATP formation. It consists of a core antenna complex that captures photons, and an electron transfer chain that converts photonic excitation into a charge separation. This chain is Photosystem II reaction center protein K, found in Cyanothece sp. (strain PCC 7425 / ATCC 29141).